The chain runs to 695 residues: Frizzled and smoothened-like protein O (695 aa).

A signal peptide spans M1–S23. Residues Q24–E233 are Extracellular-facing. An FZ domain is found at D28–P173. 5 disulfide bridges follow: C33-C96, C42-C89, C80-C125, C114-C170, and C118-C138. Residue N47 is glycosylated (N-linked (GlcNAc...) asparagine). 2 N-linked (GlcNAc...) asparagine glycosylation sites follow: N137 and N178. A helical membrane pass occupies residues A234–F254. Residues P255–N262 are Cytoplasmic-facing. Residues W263–E283 traverse the membrane as a helical segment. Residues A284–T307 lie on the Extracellular side of the membrane. A helical transmembrane segment spans residues C308–L328. Residues Y329–K343 lie on the Cytoplasmic side of the membrane. The chain crosses the membrane as a helical span at residues Y344 to I364. Residues K365 to Q387 lie on the Extracellular side of the membrane. A helical membrane pass occupies residues Y388 to T408. At S409 to S435 the chain is on the cytoplasmic side. A helical membrane pass occupies residues I436 to V456. The Extracellular segment spans residues T457–A500. Residues I501–L521 traverse the membrane as a helical segment. The Cytoplasmic segment spans residues Q522–V695. Polar residues predominate over residues S545–D556. The interval S545–V695 is disordered. Over residues N593–S608 the composition is skewed to low complexity. Positions T609–S625 are enriched in polar residues. Residues N626–N686 show a composition bias toward low complexity. The stretch at N653–N691 forms a coiled coil.

It belongs to the G-protein coupled receptor Fz/Smo family.

The protein resides in the membrane. This is Frizzled and smoothened-like protein O (fslO) from Dictyostelium discoideum (Social amoeba).